The sequence spans 311 residues: tRNA pseudouridine synthase B (311 aa).

His43 is a binding site for substrate. Asp48 (nucleophile) is an active-site residue. Substrate-binding residues include Tyr76, Tyr179, and Leu200.

The protein belongs to the pseudouridine synthase TruB family. Type 1 subfamily.

The enzyme catalyses uridine(55) in tRNA = pseudouridine(55) in tRNA. Its function is as follows. Responsible for synthesis of pseudouridine from uracil-55 in the psi GC loop of transfer RNAs. This chain is tRNA pseudouridine synthase B, found in Sodalis glossinidius (strain morsitans).